Reading from the N-terminus, the 491-residue chain is MFKLAKIMIQGTGSSVGKSILVTALCRIFKQDGYTVCPYKSQNMALNSYITYDGKEMGRAQVLQAHAAGLEPEAYMNPILLKPTGDKKCQIIFNGEVYGNSTAMEYHNMKTKFGEKLKDQFKNIEEKFDIVVIEGAGSPAEINLRDKDIVNMGFAEMVDAPVLLAGDIDRGGVFASLAGTMLLLTEEERNRVKGTIINKFRGDIEILKPGLKMLEDIIKIPTVGVVPYLKFQLEDEDGAIDFNRNINAPIDIAVIKLPRISNFTDFDALKVEEDVSIRYITSKEDFGKPDLLIVPGSKNTIEDLLALRKCGLEEKIKEYSKTGTIIGICGGYQMLGKTLKDPYKVESEELETQGMGLLNVDTVFEKEKVTTRVKANSEDTEVYGYEIHMGICNYKEGAKPLFNIYDENGKKVNRNDGAINEKGNVMGTYIHGVFDGVEFREKVLNNIRKSKNMEERNAINYENLREKNLDMLADLVRENIDMDYIYKIIGM.

A GATase cobBQ-type domain is found at 249-439 (PIDIAVIKLP…IHGVFDGVEF (191 aa)). The active-site Nucleophile is the C329. The active site involves H431.

Belongs to the CobB/CobQ family. CobQ subfamily.

It functions in the pathway cofactor biosynthesis; adenosylcobalamin biosynthesis. In terms of biological role, catalyzes amidations at positions B, D, E, and G on adenosylcobyrinic A,C-diamide. NH(2) groups are provided by glutamine, and one molecule of ATP is hydrogenolyzed for each amidation. The polypeptide is Cobyric acid synthase (Clostridium tetani (strain Massachusetts / E88)).